We begin with the raw amino-acid sequence, 173 residues long: 3-hydroxydecanoyl-[acyl-carrier-protein] dehydratase (173 aa).

Residue His71 is part of the active site.

This sequence belongs to the thioester dehydratase family. FabA subfamily. As to quaternary structure, homodimer.

It is found in the cytoplasm. It catalyses the reaction a (3R)-hydroxyacyl-[ACP] = a (2E)-enoyl-[ACP] + H2O. The enzyme catalyses (3R)-hydroxydecanoyl-[ACP] = (2E)-decenoyl-[ACP] + H2O. It carries out the reaction (2E)-decenoyl-[ACP] = (3Z)-decenoyl-[ACP]. The protein operates within lipid metabolism; fatty acid biosynthesis. Necessary for the introduction of cis unsaturation into fatty acids. Catalyzes the dehydration of (3R)-3-hydroxydecanoyl-ACP to E-(2)-decenoyl-ACP and then its isomerization to Z-(3)-decenoyl-ACP. Can catalyze the dehydratase reaction for beta-hydroxyacyl-ACPs with saturated chain lengths up to 16:0, being most active on intermediate chain length. The protein is 3-hydroxydecanoyl-[acyl-carrier-protein] dehydratase of Bradyrhizobium sp. (strain BTAi1 / ATCC BAA-1182).